We begin with the raw amino-acid sequence, 85 residues long: UPF0410 protein YdaS (85 aa).

The next 3 helical transmembrane spans lie at 2–22 (LSFL…SAIV), 28–48 (GGIF…HGLL), and 58–78 (FAIF…GLIF).

It belongs to the UPF0410 family.

Its subcellular location is the cell membrane. The sequence is that of UPF0410 protein YdaS (ydaS) from Bacillus subtilis (strain 168).